A 206-amino-acid chain; its full sequence is Large ribosomal subunit protein uL4 (206 aa).

The disordered stretch occupies residues 46-78; that stretch reads GNRAQKDREQVKHTTKKPWRQKGTGRARAGMSS. Basic residues predominate over residues 58 to 70; it reads HTTKKPWRQKGTG.

The protein belongs to the universal ribosomal protein uL4 family. In terms of assembly, part of the 50S ribosomal subunit.

In terms of biological role, one of the primary rRNA binding proteins, this protein initially binds near the 5'-end of the 23S rRNA. It is important during the early stages of 50S assembly. It makes multiple contacts with different domains of the 23S rRNA in the assembled 50S subunit and ribosome. Forms part of the polypeptide exit tunnel. This Burkholderia lata (strain ATCC 17760 / DSM 23089 / LMG 22485 / NCIMB 9086 / R18194 / 383) protein is Large ribosomal subunit protein uL4.